The sequence spans 388 residues: Succinate--CoA ligase [ADP-forming] subunit beta (388 aa).

An ATP-grasp domain is found at 9 to 244 (KSLFAEYGLP…PSQDDAREAH (236 aa)). ATP contacts are provided by residues lysine 46, 53 to 55 (GRG), glutamate 99, threonine 102, and glutamate 107. Mg(2+) is bound by residues asparagine 199 and aspartate 213. Substrate contacts are provided by residues asparagine 264 and 321 to 323 (GIV).

It belongs to the succinate/malate CoA ligase beta subunit family. As to quaternary structure, heterotetramer of two alpha and two beta subunits. The cofactor is Mg(2+).

The enzyme catalyses succinate + ATP + CoA = succinyl-CoA + ADP + phosphate. The catalysed reaction is GTP + succinate + CoA = succinyl-CoA + GDP + phosphate. It participates in carbohydrate metabolism; tricarboxylic acid cycle; succinate from succinyl-CoA (ligase route): step 1/1. Its function is as follows. Succinyl-CoA synthetase functions in the citric acid cycle (TCA), coupling the hydrolysis of succinyl-CoA to the synthesis of either ATP or GTP and thus represents the only step of substrate-level phosphorylation in the TCA. The beta subunit provides nucleotide specificity of the enzyme and binds the substrate succinate, while the binding sites for coenzyme A and phosphate are found in the alpha subunit. This is Succinate--CoA ligase [ADP-forming] subunit beta from Shewanella oneidensis (strain ATCC 700550 / JCM 31522 / CIP 106686 / LMG 19005 / NCIMB 14063 / MR-1).